A 243-amino-acid polypeptide reads, in one-letter code: Ribosomal RNA small subunit methyltransferase G (243 aa).

Residues Gly79, Phe84, 130 to 131 (AE), and Arg150 each bind S-adenosyl-L-methionine. Positions 219–243 (EKKKQTPNKYPRKPGTPGKDPIGKK) are disordered.

It belongs to the methyltransferase superfamily. RNA methyltransferase RsmG family.

Its subcellular location is the cytoplasm. Specifically methylates the N7 position of a guanine in 16S rRNA. The protein is Ribosomal RNA small subunit methyltransferase G of Pediococcus pentosaceus (strain ATCC 25745 / CCUG 21536 / LMG 10740 / 183-1w).